Consider the following 195-residue polypeptide: MHSNTAVIALSALAALVPAALAGGNLGTANVQNACGKDVYLWSIADSAGEKMITLKDGETHSEQYRANSNGGGISIKMATNPDHKDISQFEYTVSEPQVFYDLSNIDGYPFAEGGVSIHPSDSSCPAVVCEGGVKECKEAYNQPKDDHATHGCPQETDLNVVLCAGGGSAGPKKMFKPVQEKAANRPRHPHARPE.

A signal peptide spans 1 to 22; that stretch reads MHSNTAVIALSALAALVPAALA. 2 disulfide bridges follow: Cys-125-Cys-153 and Cys-130-Cys-137. A disordered region spans residues 171 to 195; sequence GPKKMFKPVQEKAANRPRHPHARPE. Residues 185-195 show a composition bias toward basic residues; the sequence is NRPRHPHARPE.

This sequence belongs to the thaumatin family.

Its subcellular location is the secreted. Its function is as follows. Might be involved in the inhibition of growth of fungal competitors and pathogenicity. The sequence is that of Antigenic thaumatin-like protein ARB_01183 from Arthroderma benhamiae (strain ATCC MYA-4681 / CBS 112371) (Trichophyton mentagrophytes).